We begin with the raw amino-acid sequence, 480 residues long: Major facilitator superfamily domain-containing protein 12 (480 aa).

An N-acetylmethionine modification is found at M1. Over 1–26 (MGPGPPAAGAAPSPRPLSLVARLSYA) the chain is Cytoplasmic. The chain crosses the membrane as a helical span at residues 27–47 (VGHFLNDLCASMWFTYLLLYL). Topologically, residues 48–56 (HSVRAYSSR) are lumenal. The helical transmembrane segment at 57–77 (GAGLLLLLGQVADGLCTPLVG) threads the bilayer. Residues 78 to 97 (YEADRAASCCARYGPRKAWH) lie on the Cytoplasmic side of the membrane. The helical transmembrane segment at 98–118 (LVGTVCVLLSFPFIFSPCLGC) threads the bilayer. At 119 to 124 (GAATPE) the chain is on the lumenal side. A helical transmembrane segment spans residues 125 to 145 (WAALLYYGPFIVIFQFGWAST). Residues 146–170 (QISHLSLIPELVTNDHEKVELTALR) are Cytoplasmic-facing. Residues 171-191 (YAFTVVANITVYGAAWLLLHL) traverse the membrane as a helical segment. The Lumenal segment spans residues 192-218 (QGSSRVEPTQDISISDQLGGQDVPVFR). Residues 219-239 (NLSLLVVGVGAVFSLLFHLGT) form a helical membrane-spanning segment. The Cytoplasmic segment spans residues 240-279 (RERRRPHAEEPGEHTPLLAPATAQPLLLWKHWLREPAFYQ). T254 is modified (phosphothreonine; by MTOR). Residues 280-302 (VGILYMTTRLIVNLSQTYMAMYL) traverse the membrane as a helical segment. Residues 303-310 (TYSLHLPK) lie on the Lumenal side of the membrane. A helical transmembrane segment spans residues 311–331 (KFIATIPLVMYLSGFLSSFLM). Residues 332-347 (KPINKCIGRNMTYFSG) are Cytoplasmic-facing. Helical transmembrane passes span 348 to 368 (LLVI…GVAV) and 369 to 389 (YAAA…SLAM). The Cytoplasmic portion of the chain corresponds to 390–402 (TADLIGPHTNSGA). The chain crosses the membrane as a helical span at residues 403–423 (FVYGSMSFLDKVANGLAVMAI). The Lumenal portion of the chain corresponds to 424-446 (QSLHPCPSELCCRACVSFYHWAM). Residues 447-467 (VAVTGGVGVAAALCLCSLLLW) form a helical membrane-spanning segment. Over 468 to 480 (PTRLRRWDRDARP) the chain is Cytoplasmic.

It belongs to the major facilitator superfamily. Post-translationally, phosphorylation at Thr-254 by MTOR via mTORC1 pathway promotes cysteine transport in lysosomes, thereby regulating lysosomal cysteine and cystine storage and redox homeostasis. In terms of tissue distribution, widely expressed, with high expression in primary melanocytes.

The protein resides in the melanosome membrane. The protein localises to the lysosome membrane. The catalysed reaction is L-cysteine(in) = L-cysteine(out). Its function is as follows. Transporter that mediates the import of cysteine into melanosomes, thereby regulating skin pigmentation. In melanosomes, cysteine import is required both for normal levels of cystine, the oxidized dimer of cysteine, and provide cysteine for the production of the cysteinyldopas used in pheomelanin synthesis, thereby regulating skin pigmentation. Also catalyzes import of cysteine into lysosomes in non-pigmented cells, regulating lysosomal cystine and cysteine storage, which is essnetial for redox homeostasis. This chain is Major facilitator superfamily domain-containing protein 12, found in Homo sapiens (Human).